The chain runs to 361 residues: 3-dehydroquinate synthase (361 aa).

NAD(+) contacts are provided by residues 73-78 (DAEAGK), 107-111 (GAATD), 131-132 (TT), Lys-144, Lys-153, and 171-174 (TLET). Glu-186, His-249, and His-265 together coordinate Zn(2+).

It belongs to the sugar phosphate cyclases superfamily. Dehydroquinate synthase family. NAD(+) serves as cofactor. The cofactor is Co(2+). It depends on Zn(2+) as a cofactor.

It localises to the cytoplasm. The enzyme catalyses 7-phospho-2-dehydro-3-deoxy-D-arabino-heptonate = 3-dehydroquinate + phosphate. The protein operates within metabolic intermediate biosynthesis; chorismate biosynthesis; chorismate from D-erythrose 4-phosphate and phosphoenolpyruvate: step 2/7. Functionally, catalyzes the conversion of 3-deoxy-D-arabino-heptulosonate 7-phosphate (DAHP) to dehydroquinate (DHQ). The protein is 3-dehydroquinate synthase of Mycobacterium leprae (strain TN).